A 164-amino-acid polypeptide reads, in one-letter code: Cell division protein SepF (164 aa).

The tract at residues 21–71 (YQQGQQPAQQQQSPVQAVPTPAPAPQQQAKRAPVTPLHKPSTTTRNAAPAE) is disordered. Low complexity predominate over residues 22–54 (QQGQQPAQQQQSPVQAVPTPAPAPQQQAKRAPV).

The protein belongs to the SepF family. In terms of assembly, homodimer. Interacts with FtsZ.

It localises to the cytoplasm. Cell division protein that is part of the divisome complex and is recruited early to the Z-ring. Probably stimulates Z-ring formation, perhaps through the cross-linking of FtsZ protofilaments. Its function overlaps with FtsA. The sequence is that of Cell division protein SepF from Clavibacter michiganensis subsp. michiganensis (strain NCPPB 382).